The chain runs to 232 residues: Orotidine 5'-phosphate decarboxylase (232 aa).

Substrate is bound by residues Asp13, Lys35, 62 to 71, Thr122, Arg182, Gln191, Gly211, and Arg212; that span reads DLKFHDIPNT. Catalysis depends on Lys64, which acts as the Proton donor.

This sequence belongs to the OMP decarboxylase family. Type 1 subfamily. In terms of assembly, homodimer.

The catalysed reaction is orotidine 5'-phosphate + H(+) = UMP + CO2. It functions in the pathway pyrimidine metabolism; UMP biosynthesis via de novo pathway; UMP from orotate: step 2/2. Its function is as follows. Catalyzes the decarboxylation of orotidine 5'-monophosphate (OMP) to uridine 5'-monophosphate (UMP). The sequence is that of Orotidine 5'-phosphate decarboxylase from Pseudomonas fluorescens (strain SBW25).